Consider the following 227-residue polypeptide: MLITIDDVLSPEELAQARKLIAASRWVSGHVTAGPQALHSKNNEQLPEDAEHLPALRRLILGALNRNPLFFAAALPLRVLTPFFNRYAGDSNHYGYHTDNAMRLAPEGGYVRADVSATVFLSDPEEYEGGVLTIADTFGTHGVKLKAGSAVVYPSSSIHQVTPVTAGARVACFMFMQSMVRDAHQRRLLFDMDMALLQLRQSVGEDNDAVVRLTGTYHNLLRLWADA.

Residues 78–178 (RVLTPFFNRY…RVACFMFMQS (101 aa)) enclose the Fe2OG dioxygenase domain. Fe cation contacts are provided by H97, D99, and H159. Residue R169 participates in 2-oxoglutarate binding.

The cofactor is Fe(2+). L-ascorbate serves as cofactor.

The chain is PKHD-type hydroxylase azo0608 from Azoarcus sp. (strain BH72).